We begin with the raw amino-acid sequence, 246 residues long: Ribonuclease PH (246 aa).

Residues R95 and 133 to 135 each bind phosphate; that span reads GTR.

It belongs to the RNase PH family. Homohexameric ring arranged as a trimer of dimers.

It catalyses the reaction tRNA(n+1) + phosphate = tRNA(n) + a ribonucleoside 5'-diphosphate. Its function is as follows. Phosphorolytic 3'-5' exoribonuclease that plays an important role in tRNA 3'-end maturation. Removes nucleotide residues following the 3'-CCA terminus of tRNAs; can also add nucleotides to the ends of RNA molecules by using nucleoside diphosphates as substrates, but this may not be physiologically important. Probably plays a role in initiation of 16S rRNA degradation (leading to ribosome degradation) during starvation. This chain is Ribonuclease PH, found in Bordetella bronchiseptica (strain ATCC BAA-588 / NCTC 13252 / RB50) (Alcaligenes bronchisepticus).